Reading from the N-terminus, the 4034-residue chain is Polyketide synthase-nonribosomal peptide synthetase ACE1 (4034 aa).

The Ketosynthase family 3 (KS3) domain occupies 10-448 (TEPIAIIGSG…GANAHVILES (439 aa)). Catalysis depends on for beta-ketoacyl synthase activity residues C183, H322, and H368. The acyl transferase stretch occupies residues 560–879 (VFTGQGAQWA…PYFGCLSRGT (320 aa)). The segment at 951-1082 (NELLGTRLPD…GDLVVLLGEP (132 aa)) is N-terminal hotdog fold. A PKS/mFAS DH domain is found at 951–1257 (NELLGTRLPD…TKPLSPPSAA (307 aa)). The tract at residues 952–1252 (ELLGTRLPDD…LQGLHTKPLS (301 aa)) is dehydratase (DH) domain. Residue H983 is the Proton acceptor; for dehydratase activity of the active site. The tract at residues 1097–1257 (MKDIDEERFY…TKPLSPPSAA (161 aa)) is C-terminal hotdog fold. The Proton donor; for dehydratase activity role is filled by D1157. Residues 1396-1594 (NMLNRFYSDA…SGADIVTPHH (199 aa)) are methyltransferase (MT) domain. The segment at 2144 to 2317 (TYWLVGLTGG…AGSSVEIGCI (174 aa)) is ketoreductase (KR)domain. The 82-residue stretch at 2424 to 2505 (KSSEEVLDIL…LLLEFVQGLI (82 aa)) folds into the Carrier 1 domain. Residue S2465 is modified to O-(pantetheine 4'-phosphoryl)serine. Positions 2512–2598 (KLDGSDGADA…SPTTSASMAS (87 aa)) are disordered. A compositionally biased stretch (low complexity) spans 2556 to 2577 (PSGPASPTSPSSATASPGRSRS). Residues 2586–2598 (TPVSPTTSASMAS) show a composition bias toward polar residues. The segment at 2608–3037 (TVPVSFGQSR…ATSLNRPAIY (430 aa)) is condensation. The interval 3073–3473 (KYATKFALRN…GGLIIEGRID (401 aa)) is adenylation. In terms of domain architecture, Carrier 2 spans 3598–3678 (AELGSDQARM…AMTDLVLSDD (81 aa)). S3638 carries the post-translational modification O-(pantetheine 4'-phosphoryl)serine. The segment at 3719–3944 (LTGATGFLGR…DFVSVENVAA (226 aa)) is reductase-like.

The protein belongs to the NRP synthetase family.

The protein localises to the cytoplasm. Its pathway is secondary metabolite biosynthesis. Hybrid PKS-NRPS synthetase; part of the gene cluster that mediates the biosynthesis of a tyrosine-derived cytochalasan acting as a fungal signal recognized by resistant rice plants and leads to avirulence in Pi33 resistant rice cultivars. The first step in the pathway is catalyzed by the hybrid PKS-NRPS ACE1, assisted by the enoyl reductase RAP1, that are responsible for fusion of the tyrosine precursor and the polyketide backbone. The polyketide synthase module (PKS) of ACE1 is responsible for the synthesis of the polyketide backbone and the downstream nonribosomal peptide synthetase (NRPS) amidates the carboxyl end of the polyketide with the tyrosine precursor. Because ACE1 lacks a designated enoylreductase (ER) domain, the required activity is provided the enoyl reductase RAP1. Reduction by the hydrolyase ORFZ, followed by dehydration and intra-molecular Diels-Alder cyclization by the Diels-Alderase ORF3 then yield the required isoindolone-fused macrocycle. A number of oxidative steps catalyzed by the tailoring enzymes identified within the cluster, including cytochrome P450 monooxygenases CYP1 to CYP4, the FAD-linked oxidoreductase OXR2 and the short-chain dehydrogenase/reductase OXR1, are further required to afford the final cytochalasans that confer avirulence and which have still to be identified. The monooxygenase CYP1 has been shown to be a site-selective C-18 hydroxylase whereas the function of CYP3 is the site-selective epoxidation of the C-6/C-7 olefin that is present in some intermediate compounds. Finally, SYN2 and RAP2 are not required for avirulence in Pi33 resistant rice cultivars. This chain is Polyketide synthase-nonribosomal peptide synthetase ACE1, found in Pyricularia oryzae (strain 70-15 / ATCC MYA-4617 / FGSC 8958) (Rice blast fungus).